Consider the following 254-residue polypeptide: Pyruvate aldolase (254 aa).

His48 functions as the Proton acceptor in the catalytic mechanism. Glu151 and Asp177 together coordinate a divalent metal cation.

The protein belongs to the HpcH/HpaI aldolase family. Requires a divalent metal cation as cofactor.

It catalyses the reaction D-glyceraldehyde + pyruvate = 2-dehydro-3-deoxy-L-galactonate. Aldolase which can catalyze in vitro the aldolisation reaction between pyruvate (PA) and D-glyceraldehyde (D-GA) to form 2-dehydro-3-deoxy-L-galactonate. The sequence is that of Pyruvate aldolase from Rhizobium etli (strain ATCC 51251 / DSM 11541 / JCM 21823 / NBRC 15573 / CFN 42).